Consider the following 254-residue polypeptide: Imidazole glycerol phosphate synthase subunit HisF (254 aa).

Residues Asp-12 and Asp-131 contribute to the active site.

It belongs to the HisA/HisF family. In terms of assembly, heterodimer of HisH and HisF.

Its subcellular location is the cytoplasm. The catalysed reaction is 5-[(5-phospho-1-deoxy-D-ribulos-1-ylimino)methylamino]-1-(5-phospho-beta-D-ribosyl)imidazole-4-carboxamide + L-glutamine = D-erythro-1-(imidazol-4-yl)glycerol 3-phosphate + 5-amino-1-(5-phospho-beta-D-ribosyl)imidazole-4-carboxamide + L-glutamate + H(+). Its pathway is amino-acid biosynthesis; L-histidine biosynthesis; L-histidine from 5-phospho-alpha-D-ribose 1-diphosphate: step 5/9. Its function is as follows. IGPS catalyzes the conversion of PRFAR and glutamine to IGP, AICAR and glutamate. The HisF subunit catalyzes the cyclization activity that produces IGP and AICAR from PRFAR using the ammonia provided by the HisH subunit. In Corynebacterium aurimucosum (strain ATCC 700975 / DSM 44827 / CIP 107346 / CN-1) (Corynebacterium nigricans), this protein is Imidazole glycerol phosphate synthase subunit HisF.